Here is a 262-residue protein sequence, read N- to C-terminus: Hydroxyethylthiazole kinase (262 aa).

Position 50 (Met50) interacts with substrate. ATP-binding residues include Arg125 and Thr171. A substrate-binding site is contributed by Gly198.

It belongs to the Thz kinase family. It depends on Mg(2+) as a cofactor.

The catalysed reaction is 5-(2-hydroxyethyl)-4-methylthiazole + ATP = 4-methyl-5-(2-phosphooxyethyl)-thiazole + ADP + H(+). The protein operates within cofactor biosynthesis; thiamine diphosphate biosynthesis; 4-methyl-5-(2-phosphoethyl)-thiazole from 5-(2-hydroxyethyl)-4-methylthiazole: step 1/1. Catalyzes the phosphorylation of the hydroxyl group of 4-methyl-5-beta-hydroxyethylthiazole (THZ). The sequence is that of Hydroxyethylthiazole kinase from Escherichia coli O7:K1 (strain IAI39 / ExPEC).